Consider the following 377-residue polypeptide: Succinyl-diaminopimelate desuccinylase (377 aa).

Residue His66 coordinates Zn(2+). Asp68 is an active-site residue. Asp99 is a binding site for Zn(2+). Glu133 (proton acceptor) is an active-site residue. Glu134, Glu162, and His348 together coordinate Zn(2+).

This sequence belongs to the peptidase M20A family. DapE subfamily. In terms of assembly, homodimer. It depends on Zn(2+) as a cofactor. Requires Co(2+) as cofactor.

It carries out the reaction N-succinyl-(2S,6S)-2,6-diaminopimelate + H2O = (2S,6S)-2,6-diaminopimelate + succinate. Its pathway is amino-acid biosynthesis; L-lysine biosynthesis via DAP pathway; LL-2,6-diaminopimelate from (S)-tetrahydrodipicolinate (succinylase route): step 3/3. Its function is as follows. Catalyzes the hydrolysis of N-succinyl-L,L-diaminopimelic acid (SDAP), forming succinate and LL-2,6-diaminopimelate (DAP), an intermediate involved in the bacterial biosynthesis of lysine and meso-diaminopimelic acid, an essential component of bacterial cell walls. This Xylella fastidiosa (strain M23) protein is Succinyl-diaminopimelate desuccinylase.